The sequence spans 437 residues: FK506-binding protein 3 (437 aa).

Composition is skewed to acidic residues over residues 73–90, 106–131, and 179–220; these read DIEAEEADELDSEEEEEE, EEEEDEDEEDLDIDGSSDEEDDEDVS, and ADED…DASD. 2 disordered regions span residues 73–132 and 169–349; these read DIEA…DVSE and HLTG…QTAK. 2 stretches are compositionally biased toward basic and acidic residues: residues 256–270 and 292–324; these read KKEDKKSVQFTKDLE and AKKEEPKKEEPKKEQPKKEQPKKEQPKKEEASK. Residues 351-437 form the PPIase FKBP-type domain; it reads GNKVGIRYIG…TFDIKLVSIK (87 aa).

This sequence belongs to the FKBP-type PPIase family. FKBP3/4 subfamily.

It localises to the nucleus. The protein resides in the nucleolus. It catalyses the reaction [protein]-peptidylproline (omega=180) = [protein]-peptidylproline (omega=0). With respect to regulation, inhibited by both FK506 and rapamycin. PPIases accelerate the folding of proteins. It catalyzes the cis-trans isomerization of proline imidic peptide bonds in oligopeptides. The protein is FK506-binding protein 3 (FPR3) of Debaryomyces hansenii (strain ATCC 36239 / CBS 767 / BCRC 21394 / JCM 1990 / NBRC 0083 / IGC 2968) (Yeast).